Reading from the N-terminus, the 314-residue chain is Pantothenate synthetase (314 aa).

43 to 50 (MGALHEGH) is a binding site for ATP. His50 functions as the Proton donor in the catalytic mechanism. Gln75 lines the (R)-pantoate pocket. Gln75 contributes to the beta-alanine binding site. The interval 112–131 (MYPDGTRTSVHPGPLGDDLE) is disordered. 161 to 164 (GEKD) contacts ATP. A (R)-pantoate-binding site is contributed by Gln167. Residues Val190 and 198 to 201 (LSSR) each bind ATP.

It belongs to the pantothenate synthetase family. In terms of assembly, homodimer.

The protein resides in the cytoplasm. The catalysed reaction is (R)-pantoate + beta-alanine + ATP = (R)-pantothenate + AMP + diphosphate + H(+). Its pathway is cofactor biosynthesis; (R)-pantothenate biosynthesis; (R)-pantothenate from (R)-pantoate and beta-alanine: step 1/1. Catalyzes the condensation of pantoate with beta-alanine in an ATP-dependent reaction via a pantoyl-adenylate intermediate. The sequence is that of Pantothenate synthetase from Mycolicibacterium smegmatis (strain ATCC 700084 / mc(2)155) (Mycobacterium smegmatis).